The chain runs to 65 residues: Large ribosomal subunit protein bL35 (65 aa).

A disordered region spans residues 1-26 (MPKIKTVRGAAKRFKKTASGGFKRKQ). A compositionally biased stretch (basic residues) spans 10-26 (AAKRFKKTASGGFKRKQ).

Belongs to the bacterial ribosomal protein bL35 family.

This chain is Large ribosomal subunit protein bL35, found in Haemophilus ducreyi (strain 35000HP / ATCC 700724).